The following is a 966-amino-acid chain: Glycine dehydrogenase (decarboxylating) (966 aa).

Position 713 is an N6-(pyridoxal phosphate)lysine (K713).

It belongs to the GcvP family. As to quaternary structure, the glycine cleavage system is composed of four proteins: P, T, L and H. Pyridoxal 5'-phosphate serves as cofactor.

The catalysed reaction is N(6)-[(R)-lipoyl]-L-lysyl-[glycine-cleavage complex H protein] + glycine + H(+) = N(6)-[(R)-S(8)-aminomethyldihydrolipoyl]-L-lysyl-[glycine-cleavage complex H protein] + CO2. Functionally, the glycine cleavage system catalyzes the degradation of glycine. The P protein binds the alpha-amino group of glycine through its pyridoxal phosphate cofactor; CO(2) is released and the remaining methylamine moiety is then transferred to the lipoamide cofactor of the H protein. The polypeptide is Glycine dehydrogenase (decarboxylating) (Psychromonas ingrahamii (strain DSM 17664 / CCUG 51855 / 37)).